The sequence spans 213 residues: StAR-related lipid transfer protein 5 (213 aa).

The START domain maps to methionine 1–glutamate 213.

Its function is as follows. May be involved in the intracellular transport of sterols or other lipids. May bind cholesterol or other sterols. This is StAR-related lipid transfer protein 5 (STARD5) from Homo sapiens (Human).